The sequence spans 91 residues: Acylphosphatase (91 aa).

The Acylphosphatase-like domain occupies 5–91; it reads CLHAYVGGRV…QGIAGFIVRR (87 aa). Residues R20 and N38 contribute to the active site.

Belongs to the acylphosphatase family.

It catalyses the reaction an acyl phosphate + H2O = a carboxylate + phosphate + H(+). The protein is Acylphosphatase (acyP) of Pseudomonas paraeruginosa (strain DSM 24068 / PA7) (Pseudomonas aeruginosa (strain PA7)).